Reading from the N-terminus, the 2205-residue chain is Genome polyprotein (2205 aa).

Gly-2 carries N-myristoyl glycine; by host lipidation. The Cytoplasmic segment spans residues 2–1518 (GAQVSSQKVG…NINRAMTILQ (1517 aa)). An amphipathic alpha-helix region spans residues 579–599 (GLGDLIEGVVEGVTRNALTPL). Polar residues predominate over residues 598–613 (PLTPVNNLPDTRSSGP). Residues 598–619 (PLTPVNNLPDTRSSGPAHSKET) form a disordered region. Catalysis depends on for protease 2A activity residues His-899 and Asp-917. Residues Cys-934 and Cys-936 each coordinate Zn(2+). Residue Cys-988 is the For protease 2A activity of the active site. Residues Cys-994 and His-996 each contribute to the Zn(2+) site. A membrane-binding region spans residues 1126-1198 (GDSWLKKFTE…HQSCPSQEHQ (73 aa)). The tract at residues 1126–1264 (GDSWLKKFTE…SPGTGKSVAT (139 aa)) is oligomerization. Residues 1147–1151 (SNKIS) form an RNA-binding region. One can recognise an SF3 helicase domain in the interval 1230–1386 (EHTINNYVQF…SEYSRDGKLN (157 aa)). 1254-1261 (GSPGTGKS) is an ATP binding site. Residues Cys-1394, Cys-1397, Cys-1406, and Cys-1411 each coordinate Zn(2+). The C4-type zinc finger occupies 1394 to 1411 (CKNCHQPANFKRCCPLVC). The segment at 1438-1445 (ERNRRSSI) is RNA-binding. The tract at residues 1449–1454 (MEALFQ) is oligomerization. An intramembrane segment occupies 1519-1534 (AVTTFAAVAGVVYVMY). Over 1535–2205 (KLFAGHQGAY…TLYRRWLDSF (671 aa)) the chain is Cytoplasmic. At Tyr-1544 the chain carries O-(5'-phospho-RNA)-tyrosine. A Peptidase C3 domain is found at 1564–1742 (GPGFDYAVAM…FAAALKRSYF (179 aa)). Residues His-1603, Glu-1634, and Cys-1710 each act as for protease 3C activity in the active site. In terms of domain architecture, RdRp catalytic spans 1971 to 2086 (MEEKLFDYTG…SYPHEVDASL (116 aa)). Residues Asp-1977 and Asp-2072 each contribute to the Mg(2+) site.

This sequence belongs to the picornaviruses polyprotein family. In terms of assembly, interacts with capsid protein VP1 and capsid protein VP3 to form heterotrimeric protomers. As to quaternary structure, interacts with capsid protein VP0, and capsid protein VP3 to form heterotrimeric protomers. Interacts with human PVR. Five protomers subsequently associate to form pentamers which serve as building blocks for the capsid. Interacts with capsid protein VP2, capsid protein VP3 and capsid protein VP4 following cleavage of capsid protein VP0. Interacts with capsid protein VP1 and capsid protein VP3 in the mature capsid. In terms of assembly, interacts with capsid protein VP0 and capsid protein VP1 to form heterotrimeric protomers. Five protomers subsequently associate to form pentamers which serve as building blocks for the capsid. Interacts with capsid protein VP4 in the mature capsid. Interacts with protein 2C; this interaction may be important for virion morphogenesis. As to quaternary structure, interacts with capsid protein VP1 and capsid protein VP3. Homodimer. In terms of assembly, homohexamer; forms a hexameric ring structure with 6-fold symmetry characteristic of AAA+ ATPases. Interacts (via N-terminus) with host RTN3 (via reticulon domain); this interaction is important for viral replication. Interacts with capsid protein VP3; this interaction may be important for virion morphogenesis. As to quaternary structure, interacts with protein 3CD. Homodimer. Interacts with host GBF1. Interacts (via GOLD domain) with host ACBD3 (via GOLD domain); this interaction allows the formation of a viral protein 3A/ACBD3 heterotetramer with a 2:2 stoichiometry, which will stimulate the recruitment of host PI4KB in order to synthesize PI4P at the viral RNA replication sites. In terms of assembly, interacts with RNA-directed RNA polymerase. As to quaternary structure, interacts with protein 3AB and with RNA-directed RNA polymerase. Interacts with Viral protein genome-linked and with protein 3CD. The cofactor is Mg(2+). Specific enzymatic cleavages in vivo by the viral proteases yield processing intermediates and the mature proteins. Post-translationally, myristoylation is required for the formation of pentamers during virus assembly. Further assembly of 12 pentamers and a molecule of genomic RNA generates the provirion. In terms of processing, during virion maturation, immature virions are rendered infectious following cleavage of VP0 into VP4 and VP2. This maturation seems to be an autocatalytic event triggered by the presence of RNA in the capsid and it is followed by a conformational change infectious virion. Myristoylation is required during RNA encapsidation and formation of the mature virus particle. Post-translationally, VPg is uridylylated by the polymerase into VPg-pUpU. This acts as a nucleotide-peptide primer for the genomic RNA replication.

It is found in the virion. Its subcellular location is the host cytoplasm. The protein resides in the host cytoplasmic vesicle membrane. The protein localises to the host nucleus. It carries out the reaction a ribonucleoside 5'-triphosphate + H2O = a ribonucleoside 5'-diphosphate + phosphate + H(+). It catalyses the reaction Selective cleavage of Tyr-|-Gly bond in the picornavirus polyprotein.. The enzyme catalyses RNA(n) + a ribonucleoside 5'-triphosphate = RNA(n+1) + diphosphate. The catalysed reaction is Selective cleavage of Gln-|-Gly bond in the poliovirus polyprotein. In other picornavirus reactions Glu may be substituted for Gln, and Ser or Thr for Gly.. Replication or transcription is subject to high level of random mutations by the nucleotide analog ribavirin. Forms an icosahedral capsid of pseudo T=3 symmetry with capsid proteins VP2 and VP3. The capsid is 300 Angstroms in diameter, composed of 60 copies of each capsid protein and enclosing the viral positive strand RNA genome. Capsid protein VP1 mainly forms the vertices of the capsid. Capsid protein VP1 interacts with host cell receptor PVR to provide virion attachment to target host cells. This attachment induces virion internalization predominantly through clathrin- and caveolin-independent endocytosis in Hela cells and through caveolin-mediated endocytosis in brain microvascular endothelial cells. Tyrosine kinases are probably involved in the entry process. Virus binding to PVR induces increased junctional permeability and rearrangement of junctional proteins. Modulation of endothelial tight junctions, as well as cytolytic infection of endothelial cells themselves, may result in loss of endothelial integrity which may help the virus to reach the CNS. After binding to its receptor, the capsid undergoes conformational changes. Capsid protein VP1 N-terminus (that contains an amphipathic alpha-helix) and capsid protein VP4 are externalized. Together, they shape a pore in the host membrane through which viral genome is translocated to host cell cytoplasm. Its function is as follows. Forms an icosahedral capsid of pseudo T=3 symmetry with capsid proteins VP2 and VP3. The capsid is 300 Angstroms in diameter, composed of 60 copies of each capsid protein and enclosing the viral positive strand RNA genome. In terms of biological role, lies on the inner surface of the capsid shell. After binding to the host receptor, the capsid undergoes conformational changes. Capsid protein VP4 is released, Capsid protein VP1 N-terminus is externalized, and together, they shape a pore in the host membrane through which the viral genome is translocated into the host cell cytoplasm. Functionally, component of immature procapsids, which is cleaved into capsid proteins VP4 and VP2 after maturation. Allows the capsid to remain inactive before the maturation step. Cysteine protease that cleaves viral polyprotein and specific host proteins. It is responsible for the autocatalytic cleavage between the P1 and P2 regions, which is the first cleavage occurring in the polyprotein. Also cleaves the host translation initiation factor EIF4G1, in order to shut down the capped cellular mRNA translation. Inhibits the host nucleus-cytoplasm protein and RNA trafficking by cleaving host members of the nuclear pores including NUP98, NUP62 and NUP153. Counteracts stress granule formation probably by antagonizing its assembly or promoting its dissassembly. Cleaves and inhibits host IFIH1/MDA5, thereby inhibiting the type-I IFN production and the establishment of the antiviral state. Cleaves and inhibits host MAVS, thereby inhibiting the type-I IFN production and the establishment of the antiviral state. Its function is as follows. Plays an essential role in the virus replication cycle by acting as a viroporin. Creates a pore in the host endoplasmic reticulum and as a consequence releases Ca2+ in the cytoplasm of infected cell. In turn, high levels of cytoplasmic calcium may trigger membrane trafficking and transport of viral ER-associated proteins to viroplasms, sites of viral genome replication. In terms of biological role, induces and associates with structural rearrangements of intracellular membranes. Displays RNA-binding, nucleotide binding and NTPase activities. May play a role in virion morphogenesis and viral RNA encapsidation by interacting with the capsid protein VP3. Functionally, localizes the viral replication complex to the surface of membranous vesicles. Together with protein 3CD binds the Cis-Active RNA Element (CRE) which is involved in RNA synthesis initiation. Acts as a cofactor to stimulate the activity of 3D polymerase, maybe through a nucleid acid chaperone activity. Localizes the viral replication complex to the surface of membranous vesicles. It inhibits host cell endoplasmic reticulum-to-Golgi apparatus transport and causes the disassembly of the Golgi complex, possibly through GBF1 interaction. This would result in depletion of MHC, trail receptors and IFN receptors at the host cell surface. Plays an essential role in viral RNA replication by recruiting ACBD3 and PI4KB at the viral replication sites, thereby allowing the formation of the rearranged membranous structures where viral replication takes place. Its function is as follows. Acts as a primer for viral RNA replication and remains covalently bound to viral genomic RNA. VPg is uridylylated prior to priming replication into VPg-pUpU. The oriI viral genomic sequence may act as a template for this. The VPg-pUpU is then used as primer on the genomic RNA poly(A) by the RNA-dependent RNA polymerase to replicate the viral genome. During genome replication, the VPg-RNA linkage is removed by the host TDP2, thereby accelerating replication. During the late stage of the replication cycle, host TDP2 is excluded from sites of viral RNA synthesis and encapsidation, allowing for the generation of progeny virions. In terms of biological role, involved in the viral replication complex and viral polypeptide maturation. It exhibits protease activity with a specificity and catalytic efficiency that is different from protease 3C. Protein 3CD lacks polymerase activity. Protein 3CD binds to the 5'UTR of the viral genome. Functionally, major viral protease that mediates proteolytic processing of the polyprotein. Cleaves host EIF5B, contributing to host translation shutoff. Also cleaves host PABPC1, contributing to host translation shutoff. Cleaves host RIGI and thus contributes to the inhibition of type I interferon production. Cleaves host NLRP1, triggers host N-glycine-mediated degradation of the autoinhibitory NLRP1 N-terminal fragment. Inhibits the integrated stress response (ISR) in the infected cell by cleaving host G3BP1. Stress granule formation is thus inhibited, which allows protein synthesis and viral replication. Replicates the viral genomic RNA on the surface of intracellular membranes. May form linear arrays of subunits that propagate along a strong head-to-tail interaction called interface-I. Covalently attaches UMP to a tyrosine of VPg, which is used to prime RNA synthesis. The positive stranded RNA genome is first replicated at virus induced membranous vesicles, creating a dsRNA genomic replication form. This dsRNA is then used as template to synthesize positive stranded RNA genomes. ss(+)RNA genomes are either translated, replicated or encapsidated. The sequence is that of Genome polyprotein from Homo sapiens (Human).